We begin with the raw amino-acid sequence, 268 residues long: Small ribosomal subunit protein uS2 (268 aa).

Residues 233–268 (SVREEEFAEAAAEGEEKPARRAPAKKAAKKGDDAQA) are disordered.

It belongs to the universal ribosomal protein uS2 family.

The chain is Small ribosomal subunit protein uS2 from Stenotrophomonas maltophilia (strain K279a).